Consider the following 145-residue polypeptide: Large ribosomal subunit protein bL19 (145 aa).

It belongs to the bacterial ribosomal protein bL19 family.

In terms of biological role, this protein is located at the 30S-50S ribosomal subunit interface and may play a role in the structure and function of the aminoacyl-tRNA binding site. This is Large ribosomal subunit protein bL19 from Brucella abortus (strain S19).